Reading from the N-terminus, the 120-residue chain is Large ribosomal subunit protein uL22 (120 aa).

The tract at residues methionine 1 to lysine 20 is disordered.

Belongs to the universal ribosomal protein uL22 family. As to quaternary structure, part of the 50S ribosomal subunit.

Functionally, this protein binds specifically to 23S rRNA; its binding is stimulated by other ribosomal proteins, e.g. L4, L17, and L20. It is important during the early stages of 50S assembly. It makes multiple contacts with different domains of the 23S rRNA in the assembled 50S subunit and ribosome. In terms of biological role, the globular domain of the protein is located near the polypeptide exit tunnel on the outside of the subunit, while an extended beta-hairpin is found that lines the wall of the exit tunnel in the center of the 70S ribosome. The polypeptide is Large ribosomal subunit protein uL22 (Borrelia hermsii (strain HS1 / DAH)).